The sequence spans 301 residues: MVTPIAVVGPTASGKSALGIALAHKLDGEVVNVDSMQLYKGMDIGTAKLTVEEREGIAHHQLDVWDVTETASVARFQSDAVADVEDIMSRGKTPILVGGSMLYVQSLVDDWQFPPTDSAVRARFEARLADIGVEALHAELTQLDPEAAAVIENNDPRRTVRALEVIELTGQPFQASQPPKDAPPRWGTRIIGLKTTPEWLNPRIEQRTAMMFEQGFVAEVEHLVQQGLIADSTAGRAIGYSQVLAAMAGEMTWEDAFERTVTGTRRYVRRQRSWFNRDHRVSWVDASGDPTAQALEILGLQ.

9 to 16 (GPTASGKS) provides a ligand contact to ATP. A substrate-binding site is contributed by 11-16 (TASGKS). The tract at residues 34-37 (DSMQ) is interaction with substrate tRNA.

The protein belongs to the IPP transferase family. Monomer. It depends on Mg(2+) as a cofactor.

The enzyme catalyses adenosine(37) in tRNA + dimethylallyl diphosphate = N(6)-dimethylallyladenosine(37) in tRNA + diphosphate. Functionally, catalyzes the transfer of a dimethylallyl group onto the adenine at position 37 in tRNAs that read codons beginning with uridine, leading to the formation of N6-(dimethylallyl)adenosine (i(6)A). The chain is tRNA dimethylallyltransferase from Corynebacterium glutamicum (strain R).